Consider the following 330-residue polypeptide: DNA-directed RNA polymerase subunit alpha (330 aa).

The interval 1–231 (MQTNLLKPKT…EQLAVFAQLE (231 aa)) is alpha N-terminal domain (alpha-NTD). The segment at 250-330 (FDPILLRPVD…SWPPAGLDKR (81 aa)) is alpha C-terminal domain (alpha-CTD).

This sequence belongs to the RNA polymerase alpha chain family. Homodimer. The RNAP catalytic core consists of 2 alpha, 1 beta, 1 beta' and 1 omega subunit. When a sigma factor is associated with the core the holoenzyme is formed, which can initiate transcription.

The enzyme catalyses RNA(n) + a ribonucleoside 5'-triphosphate = RNA(n+1) + diphosphate. In terms of biological role, DNA-dependent RNA polymerase catalyzes the transcription of DNA into RNA using the four ribonucleoside triphosphates as substrates. In Polaromonas naphthalenivorans (strain CJ2), this protein is DNA-directed RNA polymerase subunit alpha.